We begin with the raw amino-acid sequence, 571 residues long: Proline--tRNA ligase (571 aa).

Belongs to the class-II aminoacyl-tRNA synthetase family. ProS type 1 subfamily. Homodimer.

The protein resides in the cytoplasm. The catalysed reaction is tRNA(Pro) + L-proline + ATP = L-prolyl-tRNA(Pro) + AMP + diphosphate. Functionally, catalyzes the attachment of proline to tRNA(Pro) in a two-step reaction: proline is first activated by ATP to form Pro-AMP and then transferred to the acceptor end of tRNA(Pro). As ProRS can inadvertently accommodate and process non-cognate amino acids such as alanine and cysteine, to avoid such errors it has two additional distinct editing activities against alanine. One activity is designated as 'pretransfer' editing and involves the tRNA(Pro)-independent hydrolysis of activated Ala-AMP. The other activity is designated 'posttransfer' editing and involves deacylation of mischarged Ala-tRNA(Pro). The misacylated Cys-tRNA(Pro) is not edited by ProRS. This Pseudomonas fluorescens (strain ATCC BAA-477 / NRRL B-23932 / Pf-5) protein is Proline--tRNA ligase.